The chain runs to 123 residues: uncharacterized protein (123 aa).

To M.tuberculosis Rv0477.

This is an uncharacterized protein from Mycobacterium leprae (strain TN).